The chain runs to 698 residues: Macrophomene synthase (698 aa).

The terpene cyclase stretch occupies residues 21 to 340 (MEYMYSVPLD…SCDRYSSYRR (320 aa)). D113 is a Mg(2+) binding site. Positions 113 to 117 (DNIAE) match the DDXXD 1 motif. Positions 242–250 (NDFFSFNYE) match the NSE/DTE motif. The interval 341–696 (EKHQMELPIR…IQLALERLRI (356 aa)) is prenyltransferase. The disordered stretch occupies residues 368–387 (LPNGKQLDAPTESSGKDLSD). Residues K417, R420, and H449 each coordinate isopentenyl diphosphate. Mg(2+) is bound by residues D456 and D460. Positions 456–460 (DDIED) match the DDXXD 2 motif. R465 serves as a coordination point for dimethylallyl diphosphate. R466 provides a ligand contact to isopentenyl diphosphate. K543, T544, Q579, N586, K596, and K606 together coordinate dimethylallyl diphosphate.

In the N-terminal section; belongs to the terpene synthase family. The protein in the C-terminal section; belongs to the FPP/GGPP synthase family. As to quaternary structure, hexamer. Requires Mg(2+) as cofactor.

The enzyme catalyses 5 isopentenyl diphosphate + dimethylallyl diphosphate = all-trans-hexaprenyl diphosphate + 5 diphosphate. It catalyses the reaction all-trans-hexaprenyl diphosphate = macrophomene + diphosphate. In terms of biological role, bifunctional terpene synthase that converts dimethylallyl diphosphate (DMAPP) and isopentenyl diphosphate (IPP) into macrophomene as a single product. The C-terminal prenyltransferase (PT) domain of MpMS catalyzes formation of hexaprenyl diphosphate (HexPP), whereas the N-terminal terpene cyclase (TC) domain catalyzes the cyclization of HexPP to macrophomene. This Macrophomina phaseolina (strain MS6) (Charcoal rot fungus) protein is Macrophomene synthase.